A 266-amino-acid polypeptide reads, in one-letter code: Small ribosomal subunit protein uS2 (266 aa).

The tract at residues 229-254 (RTSDKEADTTTEEVAQEEVTDTKADE) is disordered. A compositionally biased stretch (acidic residues) spans 237–247 (TTTEEVAQEEV).

The protein belongs to the universal ribosomal protein uS2 family.

The protein is Small ribosomal subunit protein uS2 of Flavobacterium psychrophilum (strain ATCC 49511 / DSM 21280 / CIP 103535 / JIP02/86).